The primary structure comprises 294 residues: Protein farnesyltransferase/geranylgeranyltransferase type-1 subunit alpha (294 aa).

PFTA repeat units lie at residues 57-91 (YSLR…HTPS), 92-125 (YIDN…SLTK), 126-160 (NYER…NFND), 161-194 (YSQE…ETSK), and 199-233 (SLEE…KSGP).

It belongs to the protein prenyltransferase subunit alpha family. In terms of assembly, heterodimer of an alpha(cwp1) and a beta(cpp1 or cwg2) subunit. Mg(2+) serves as cofactor.

It carries out the reaction L-cysteinyl-[protein] + (2E,6E)-farnesyl diphosphate = S-(2E,6E)-farnesyl-L-cysteinyl-[protein] + diphosphate. It catalyses the reaction geranylgeranyl diphosphate + L-cysteinyl-[protein] = S-geranylgeranyl-L-cysteinyl-[protein] + diphosphate. In terms of biological role, catalyzes the transfer of a farnesyl or geranyl-geranyl moiety from farnesyl or geranyl-geranyl diphosphate to a cysteine at the fourth position from the C-terminus of several proteins having the C-terminal sequence Cys-aliphatic-aliphatic-X. The alpha(cwp1) subunit is thought to participate in a stable complex with the substrate. The beta(cpp1 or cwg2) subunits bind the peptide substrate. This chain is Protein farnesyltransferase/geranylgeranyltransferase type-1 subunit alpha (cwp1), found in Schizosaccharomyces pombe (strain 972 / ATCC 24843) (Fission yeast).